Consider the following 551-residue polypeptide: Putative ABC transporter ATP-binding protein BT9727_3105 (551 aa).

ABC transporter domains lie at 5-243 (AEIN…FRPF) and 293-525 (LSAE…SINR). ATP-binding positions include 39-46 (GGSGSGKT) and 327-334 (GKNGTGKS).

Belongs to the ABC transporter superfamily.

The protein localises to the cell membrane. Probably part of an ABC transporter complex. Responsible for energy coupling to the transport system. The polypeptide is Putative ABC transporter ATP-binding protein BT9727_3105 (Bacillus thuringiensis subsp. konkukian (strain 97-27)).